The primary structure comprises 430 residues: MRYANSQKYFKTACDLMPGGVNSPARAFSSVESDPLFIKDGSGSKVYDVDDNEYIDYVASYGPLILGHCHPQIRDALKEQIDYGTGYGSPTELENEMAELVIEAVPSIEMVRMVNSGTEATMSALRLARGYTGKNKIVKLTGCYHGHSDSLLIKAGSGVTTLGLPDSPGVPASIAENTITVPYNNLEVMEQVFNKYGDDIAGVILEPVAGNMGVVPPNEGYLEGLRELTSKYGSLLIFDEVMTGFRVSYGGAQAYYGVTPDLTCLGKVIGGGLPVGAYGGKEEIMEYIAPAGSIYQAGTLSGNPIAMRAGIETLKVLRQEGSYDQLESKSKHLAEGLAKVADKNGVSVTINRVGTMVGMYFTEGPVTDFESATSSDNDKFVKYFETMLSEGVYLAPSQFEAMFMSLVHTQEDIEKTIQIADKALSKAAQV.

The residue at position 267 (lysine 267) is an N6-(pyridoxal phosphate)lysine.

The protein belongs to the class-III pyridoxal-phosphate-dependent aminotransferase family. HemL subfamily. As to quaternary structure, homodimer. Pyridoxal 5'-phosphate serves as cofactor.

It is found in the cytoplasm. It catalyses the reaction (S)-4-amino-5-oxopentanoate = 5-aminolevulinate. The protein operates within porphyrin-containing compound metabolism; protoporphyrin-IX biosynthesis; 5-aminolevulinate from L-glutamyl-tRNA(Glu): step 2/2. The polypeptide is Glutamate-1-semialdehyde 2,1-aminomutase (Natranaerobius thermophilus (strain ATCC BAA-1301 / DSM 18059 / JW/NM-WN-LF)).